The primary structure comprises 190 residues: MAYIAKSFYDLSAIGLDGEKIDFNTFRGRAVLIENVASLUGTTTRDYNQLNELQCRFPRRLVVLGFPCNQFGHQENCQNEEILNSLKYVRPGGGYQPTFSLTQKCDVNGQNEHPVFAYLKDKLPYPYDDPFSLMTDPKLIIWSPVRRSDVSWNFEKFLIGPEGEPFRRYSRSFQTINIEPDIKRLLKVAI.

The active site involves U40. Residue U40 is a non-standard amino acid, selenocysteine.

This sequence belongs to the glutathione peroxidase family. Homotetramer.

It localises to the cytoplasm. Its subcellular location is the cytosol. It catalyses the reaction 2 glutathione + H2O2 = glutathione disulfide + 2 H2O. The catalysed reaction is a hydroperoxy polyunsaturated fatty acid + 2 glutathione = a hydroxy polyunsaturated fatty acid + glutathione disulfide + H2O. The enzyme catalyses tert-butyl hydroperoxide + 2 glutathione = tert-butanol + glutathione disulfide + H2O. It carries out the reaction cumene hydroperoxide + 2 glutathione = 2-phenylpropan-2-ol + glutathione disulfide + H2O. It catalyses the reaction (13S)-hydroperoxy-(9Z,11E)-octadecadienoate + 2 glutathione = (13S)-hydroxy-(9Z,11E)-octadecadienoate + glutathione disulfide + H2O. The catalysed reaction is (5S)-hydroperoxy-(6E,8Z,11Z,14Z)-eicosatetraenoate + 2 glutathione = (5S)-hydroxy-(6E,8Z,11Z,14Z)-eicosatetraenoate + glutathione disulfide + H2O. The enzyme catalyses (12R)-hydroperoxy-(5Z,8Z,10E,14Z)-eicosatetraenoate + 2 glutathione = (12R)-hydroxy-(5Z,8Z,10E,14Z)-eicosatetraenoate + glutathione disulfide + H2O. It carries out the reaction (15S)-hydroperoxy-(5Z,8Z,11Z,13E)-eicosatetraenoate + 2 glutathione = (15S)-hydroxy-(5Z,8Z,11Z,13E)-eicosatetraenoate + glutathione disulfide + H2O. Functionally, catalyzes the reduction of hydroperoxides in a glutathione-dependent manner thus regulating cellular redox homeostasis. Can reduce small soluble hydroperoxides such as H2O2, cumene hydroperoxide and tert-butyl hydroperoxide, as well as several fatty acid-derived hydroperoxides. Cannot reduce phosphatidycholine hydroperoxide. This is Glutathione peroxidase 2 (Gpx2) from Mus musculus (Mouse).